A 211-amino-acid chain; its full sequence is Endonuclease V (211 aa).

Mg(2+) is bound by residues D37 and D102.

The protein belongs to the endonuclease V family. Mg(2+) serves as cofactor.

The protein resides in the cytoplasm. It carries out the reaction Endonucleolytic cleavage at apurinic or apyrimidinic sites to products with a 5'-phosphate.. Its function is as follows. DNA repair enzyme involved in the repair of deaminated bases. Selectively cleaves double-stranded DNA at the second phosphodiester bond 3' to a deoxyinosine leaving behind the intact lesion on the nicked DNA. This is Endonuclease V from Ignicoccus hospitalis (strain KIN4/I / DSM 18386 / JCM 14125).